We begin with the raw amino-acid sequence, 757 residues long: Serine/threonine-protein phosphatase with EF-hands 2 (757 aa).

Residues 21–46 (KAAALIQRWYRRYMARLEMRRRCTWN) form the IQ domain. The interval 128–544 (ATALVEAFRL…PHIVQYQANK (417 aa)) is catalytic. Mn(2+) contacts are provided by Asp-179, His-181, Asp-208, and Asn-240. Residue His-241 is the Proton donor of the active site. His-292 contributes to the Mn(2+) binding site. The segment at 318-349 (CKTRKESENREEQKRKDNQTSSGQKPTPWFLP) is disordered. Residues 321-335 (RKESENREEQKRKDN) are compositionally biased toward basic and acidic residues. Residue His-492 participates in Mn(2+) binding. 3 EF-hand domains span residues 572 to 607 (AHSS…VLHL), 656 to 691 (RNRS…FSSH), and 696 to 731 (ITDD…VEQS). Positions 585, 587, 589, 596, 669, 671, 673, 680, 709, 711, 713, 715, and 720 each coordinate Ca(2+).

This sequence belongs to the PPP phosphatase family. It depends on Mn(2+) as a cofactor. In terms of tissue distribution, detected in retina, more specifically in photoreceptors.

The enzyme catalyses O-phospho-L-seryl-[protein] + H2O = L-seryl-[protein] + phosphate. The catalysed reaction is O-phospho-L-threonyl-[protein] + H2O = L-threonyl-[protein] + phosphate. Activated by calcium. May play a role in phototransduction. May dephosphorylate photoactivated rhodopsin. May function as a calcium sensing regulator of ionic currents, energy production or synaptic transmission. The polypeptide is Serine/threonine-protein phosphatase with EF-hands 2 (Ppef2) (Mus musculus (Mouse)).